The following is a 433-amino-acid chain: Metacaspase-1 (433 aa).

The disordered stretch occupies residues 1–123 (MYPGRAKPTY…PPSQVQHTGP (123 aa)). Positions 9–44 (TYNNQQAQQAQSQVGYQTGYSNAQPQQQYYTAPQQQ) are enriched in low complexity. Polar residues-rich tracts occupy residues 45 to 55 (NVSGSSMSFQH) and 83 to 109 (QQNY…QQPQ). Catalysis depends on residues His222 and Cys278.

The protein belongs to the peptidase C14B family.

Its function is as follows. Involved in cell death (apoptosis). The protein is Metacaspase-1 (MCA1) of Kluyveromyces lactis (strain ATCC 8585 / CBS 2359 / DSM 70799 / NBRC 1267 / NRRL Y-1140 / WM37) (Yeast).